Reading from the N-terminus, the 371-residue chain is Cytochrome b (371 aa).

The next 4 membrane-spanning stretches (helical) occupy residues 25–45 (FGSMLLACLALQVLTGFFLAV), 69–90 (WMMQNLHAIGASMFFICIYIHI), 105–125 (WMSGITLLITLMATAFFGYVL), and 170–190 (FFALHFILPFAIISMSSLHII). Heme b is bound by residues H75 and H89. Positions 174 and 188 each coordinate heme b. Residue H193 coordinates a ubiquinone. A run of 4 helical transmembrane segments spans residues 218–238 (YKDLLFLTLMILFMLIIVSFF), 280–300 (LGGALALVMSIMILFIIPFTH), 312–332 (LSQLMFWTLVSTFITITWAAT), and 339–358 (YIIISQVTATLYFIFFISMP).

It belongs to the cytochrome b family. As to quaternary structure, the cytochrome bc1 complex contains 3 respiratory subunits (MT-CYB, CYC1 and UQCRFS1), 2 core proteins (UQCRC1 and UQCRC2) and probably 6 low-molecular weight proteins. It depends on heme b as a cofactor.

Its subcellular location is the mitochondrion inner membrane. Functionally, component of the ubiquinol-cytochrome c reductase complex (complex III or cytochrome b-c1 complex) that is part of the mitochondrial respiratory chain. The b-c1 complex mediates electron transfer from ubiquinol to cytochrome c. Contributes to the generation of a proton gradient across the mitochondrial membrane that is then used for ATP synthesis. In Python molurus (Indian python), this protein is Cytochrome b (MT-CYB).